A 419-amino-acid polypeptide reads, in one-letter code: tRNA modification GTPase MnmE (419 aa).

Residues R2, E59, and R99 each contribute to the (6S)-5-formyl-5,6,7,8-tetrahydrofolate site. The 147-residue stretch at 197-343 (GLSVVIAGPP…LHTMIVEMAR (147 aa)) folds into the TrmE-type G domain. K(+) is bound at residue N207. GTP contacts are provided by residues 207–212 (NAGKST), 226–232 (SPVAGTT), and 251–254 (DTAG). A Mg(2+)-binding site is contributed by S211. K(+) is bound by residues S226, V228, and T231. T232 is a Mg(2+) binding site. (6S)-5-formyl-5,6,7,8-tetrahydrofolate is bound at residue K419.

The protein belongs to the TRAFAC class TrmE-Era-EngA-EngB-Septin-like GTPase superfamily. TrmE GTPase family. Homodimer. Heterotetramer of two MnmE and two MnmG subunits. K(+) is required as a cofactor.

Its subcellular location is the cytoplasm. Functionally, exhibits a very high intrinsic GTPase hydrolysis rate. Involved in the addition of a carboxymethylaminomethyl (cmnm) group at the wobble position (U34) of certain tRNAs, forming tRNA-cmnm(5)s(2)U34. The chain is tRNA modification GTPase MnmE from Sphingopyxis alaskensis (strain DSM 13593 / LMG 18877 / RB2256) (Sphingomonas alaskensis).